A 164-amino-acid chain; its full sequence is UBA-like domain-containing protein 2 (164 aa).

An N-acetylserine modification is found at Ser-2. Residues 128 to 164 (SSPTTFHHLHRPQPTWPPGAQQGGAQQKAMAAMDGQR) are disordered. Over residues 146–164 (GAQQGGAQQKAMAAMDGQR) the composition is skewed to low complexity.

Belongs to the UBALD family.

The sequence is that of UBA-like domain-containing protein 2 (UBALD2) from Homo sapiens (Human).